Here is a 279-residue protein sequence, read N- to C-terminus: MTSTATVTVPPRITAENVATLFPEVDTSLAREVFPSTVEGSAKDSEELAGYDEEQVRLMDEVCIVLDDDDKPIGSASKKACHLMTNIDRGLLHRAFSVFLFDSNNRLLLQQRASEKITFPDMWTNTCCSHPLGIPGETGAELDAAVLGVKRAAQRKLDQELGIKAEQVPLEKFEFFTRIHYKAPSDGKWGEHETVTDTQILVDYILFIQADVDLNVNPNEVRDTKYVSAQELKQMFTQPGLKFTPWFKLICNSMLFEWWSYLGTADLDKYKGEKEIRRM.

Lys78 contacts substrate. Mg(2+) is bound by residues His82 and His93. The Nudix hydrolase domain maps to 91 to 249 (LLHRAFSVFL…GLKFTPWFKL (159 aa)). Substrate is bound by residues Gln111 and Lys116. Residue Cys128 is part of the active site. Ser129 lines the substrate pocket. Residues 129-162 (SHPLGIPGETGAELDAAVLGVKRAAQRKLDQELG) carry the Nudix box motif. Glu191 and Glu193 together coordinate Mg(2+). Residue Glu193 is part of the active site.

The protein belongs to the IPP isomerase type 1 family. Mg(2+) serves as cofactor.

It carries out the reaction isopentenyl diphosphate = dimethylallyl diphosphate. It participates in isoprenoid biosynthesis; dimethylallyl diphosphate biosynthesis; dimethylallyl diphosphate from isopentenyl diphosphate: step 1/1. Its function is as follows. Isopentenyl-diphosphate delta-isomerase; part of the second module of ergosterol biosynthesis pathway that includes the middle steps of the pathway. Idi1 catalyzes the 1,3-allylic rearrangement of isopentenyl (IPP) to its highly electrophilic allylic isomer, dimethylallyl diphosphate (DMAPP). The second module is carried out in the vacuole and involves the formation of farnesyl diphosphate, which is also an important intermediate in the biosynthesis of ubiquinone, dolichol, heme and prenylated proteins. Activity by the mevalonate kinase erg12 (AFUA_4G07780) first converts mevalonate into 5-phosphomevalonate. 5-phosphomevalonate is then further converted to 5-diphosphomevalonate by the phosphomevalonate kinase erg8 (AFUA_5G10680). The diphosphomevalonate decarboxylase mvd1 (AFUA_4G07130) then produces isopentenyl diphosphate. The isopentenyl-diphosphate delta-isomerase idi1 (AFUA_6G11160) then catalyzes the 1,3-allylic rearrangement of the homoallylic substrate isopentenyl (IPP) to its highly electrophilic allylic isomer, dimethylallyl diphosphate (DMAPP). Finally the farnesyl diphosphate synthase erg20 (AFUA_5G02450) catalyzes the sequential condensation of isopentenyl pyrophosphate with dimethylallyl pyrophosphate, and then with the resultant geranylpyrophosphate to the ultimate product farnesyl pyrophosphate. This chain is Isopentenyl-diphosphate delta-isomerase idi1, found in Aspergillus fumigatus (strain ATCC MYA-4609 / CBS 101355 / FGSC A1100 / Af293) (Neosartorya fumigata).